A 146-amino-acid chain; its full sequence is 3-dehydroquinate dehydratase (146 aa).

The active-site Proton acceptor is the Tyr-23. The substrate site is built by Asn-79, His-85, and Asp-92. His-105 (proton donor) is an active-site residue. Substrate-binding positions include 106–107 (IS) and Arg-116.

Belongs to the type-II 3-dehydroquinase family. As to quaternary structure, homododecamer.

It catalyses the reaction 3-dehydroquinate = 3-dehydroshikimate + H2O. The protein operates within metabolic intermediate biosynthesis; chorismate biosynthesis; chorismate from D-erythrose 4-phosphate and phosphoenolpyruvate: step 3/7. Functionally, catalyzes a trans-dehydration via an enolate intermediate. In Variovorax paradoxus (strain S110), this protein is 3-dehydroquinate dehydratase.